A 227-amino-acid chain; its full sequence is Ribonuclease 3 (227 aa).

Positions 3–130 (TNAISKIIKY…LIGAIYLDGG (128 aa)) constitute an RNase III domain. Glu-43 serves as a coordination point for Mg(2+). Residue Asp-47 is part of the active site. Residues Asn-116 and Glu-119 each coordinate Mg(2+). Residue Glu-119 is part of the active site. The DRBM domain maps to 155 to 224 (DAKTILQEWA…ASLMLAKINY (70 aa)).

This sequence belongs to the ribonuclease III family. As to quaternary structure, homodimer. Requires Mg(2+) as cofactor.

It is found in the cytoplasm. It carries out the reaction Endonucleolytic cleavage to 5'-phosphomonoester.. Digests double-stranded RNA. Involved in the processing of primary rRNA transcript to yield the immediate precursors to the large and small rRNAs (23S and 16S). Processes some mRNAs, and tRNAs when they are encoded in the rRNA operon. Processes pre-crRNA and tracrRNA of type II CRISPR loci if present in the organism. This Ehrlichia ruminantium (strain Gardel) protein is Ribonuclease 3.